A 428-amino-acid polypeptide reads, in one-letter code: Enolase (428 aa).

Gln-164 lines the (2R)-2-phosphoglycerate pocket. The Proton donor role is filled by Glu-206. 3 residues coordinate Mg(2+): Asp-243, Glu-286, and Asp-313. 4 residues coordinate (2R)-2-phosphoglycerate: Lys-338, Arg-367, Ser-368, and Lys-389. The Proton acceptor role is filled by Lys-338.

It belongs to the enolase family. The cofactor is Mg(2+).

It is found in the cytoplasm. The protein resides in the secreted. The protein localises to the cell surface. The catalysed reaction is (2R)-2-phosphoglycerate = phosphoenolpyruvate + H2O. The protein operates within carbohydrate degradation; glycolysis; pyruvate from D-glyceraldehyde 3-phosphate: step 4/5. Functionally, catalyzes the reversible conversion of 2-phosphoglycerate (2-PG) into phosphoenolpyruvate (PEP). It is essential for the degradation of carbohydrates via glycolysis. The polypeptide is Enolase (Dehalococcoides mccartyi (strain ATCC BAA-2266 / KCTC 15142 / 195) (Dehalococcoides ethenogenes (strain 195))).